We begin with the raw amino-acid sequence, 253 residues long: uncharacterized protein (253 aa).

An N-terminal signal peptide occupies residues 1-19; the sequence is MRYLKRITIYISLLILVSG. Cysteine 20 is lipidated: N-palmitoyl cysteine. Residue cysteine 20 is the site of S-diacylglycerol cysteine attachment.

The protein belongs to the staphylococcal tandem lipoprotein family.

Its subcellular location is the cell membrane. This is an uncharacterized protein from Staphylococcus epidermidis (strain ATCC 12228 / FDA PCI 1200).